Consider the following 65-residue polypeptide: MSLVWLEAMLPLGIIGGMLCIMGNSQYYIHKAYHGRPKHIGHDEWDVAMERRDKKVVEKAAAPSS.

The chain crosses the membrane as a helical span at residues 3–23 (LVWLEAMLPLGIIGGMLCIMG).

Belongs to the complex I NDUFA1 subunit family. As to quaternary structure, complex I is composed of at least 49 different subunits.

The protein localises to the mitochondrion inner membrane. Accessory subunit of the mitochondrial membrane respiratory chain NADH dehydrogenase (Complex I), that is believed not to be involved in catalysis. Complex I functions in the transfer of electrons from NADH to the respiratory chain. The immediate electron acceptor for the enzyme is believed to be ubiquinone. The protein is NADH dehydrogenase [ubiquinone] 1 alpha subcomplex subunit 1 of Arabidopsis thaliana (Mouse-ear cress).